The chain runs to 246 residues: Small ribosomal subunit protein uS2 (246 aa).

Belongs to the universal ribosomal protein uS2 family.

The polypeptide is Small ribosomal subunit protein uS2 (Azotobacter vinelandii (strain DJ / ATCC BAA-1303)).